Reading from the N-terminus, the 544-residue chain is Ribosomal oxygenase 1 (544 aa).

The disordered stretch occupies residues 1 to 78 (MERKHMSALS…HEGERDCREM (78 aa)). Residues 10-19 (SIYQSLSGGK) are compositionally biased toward polar residues. The span at 42 to 53 (PSKKATKKKGTK) shows a compositional bias: basic residues. Over residues 63-78 (SSEKEKHEGERDCREM) the composition is skewed to basic and acidic residues. The 146-residue stretch at 197–342 (CSIRMLNPQA…DLMLKLMPAA (146 aa)) folds into the JmjC domain. Fe cation contacts are provided by H243, D245, and H308.

This sequence belongs to the ROX family. NO66 subfamily. Requires Fe(2+) as cofactor.

Its subcellular location is the nucleus. The protein localises to the nucleolus. The protein resides in the nucleoplasm. The catalysed reaction is N(6),N(6)-dimethyl-L-lysyl(36)-[histone H3] + 2 2-oxoglutarate + 2 O2 = L-lysyl(36)-[histone H3] + 2 formaldehyde + 2 succinate + 2 CO2. It carries out the reaction N(6)-methyl-L-lysyl-[protein] + 2-oxoglutarate + O2 = L-lysyl-[protein] + formaldehyde + succinate + CO2. It catalyses the reaction L-histidyl-[protein] + 2-oxoglutarate + O2 = (3S)-3-hydroxy-L-histidyl-[protein] + succinate + CO2. In terms of biological role, oxygenase that can act as both a histone lysine demethylase and a ribosomal histidine hydroxylase. Specifically demethylates 'Lys-4' (H3K4me) and 'Lys-36' (H3K36me) of histone H3, thereby playing a central role in histone code. Preferentially demethylates trimethylated H3 'Lys-4' (H3K4me3) and monomethylated H3 'Lys-4' (H3K4me1) residues, while it has weaker activity for dimethylated H3 'Lys-36' (H3K36me2). Also catalyzes demethylation of non-histone proteins. Also catalyzes the hydroxylation of 60S ribosomal protein L8 on 'His-216', thereby playing a role in ribosome biogenesis. The chain is Ribosomal oxygenase 1 (riox1) from Danio rerio (Zebrafish).